We begin with the raw amino-acid sequence, 629 residues long: Hemocyanin C chain (629 aa).

Positions 175, 179, 206, 326, 330, and 366 each coordinate Cu cation. The N-linked (GlcNAc...) asparagine glycan is linked to Asn-451. Cys-537 and Cys-585 are oxidised to a cystine. Asn-618 is a glycosylation site (N-linked (GlcNAc...) asparagine).

It belongs to the tyrosinase family. Hemocyanin subfamily. Tarantula hemocyanin is a 24-chain polymer with seven different chains identified. Hemolymph.

It localises to the secreted. The protein localises to the extracellular space. In terms of biological role, hemocyanins are copper-containing oxygen carriers occurring freely dissolved in the hemolymph of many mollusks and arthropods. This chain is Hemocyanin C chain (HCC), found in Aphonopelma sp. (American tarantula).